A 491-amino-acid polypeptide reads, in one-letter code: Proline--tRNA ligase (491 aa).

This sequence belongs to the class-II aminoacyl-tRNA synthetase family. ProS type 3 subfamily. In terms of assembly, homodimer.

Its subcellular location is the cytoplasm. It carries out the reaction tRNA(Pro) + L-proline + ATP = L-prolyl-tRNA(Pro) + AMP + diphosphate. Catalyzes the attachment of proline to tRNA(Pro) in a two-step reaction: proline is first activated by ATP to form Pro-AMP and then transferred to the acceptor end of tRNA(Pro). The protein is Proline--tRNA ligase of Halorubrum lacusprofundi (strain ATCC 49239 / DSM 5036 / JCM 8891 / ACAM 34).